The chain runs to 512 residues: Sugar transport protein MST7 (512 aa).

Residues 1–17 (MENAGAGDGAPKHYPGK) lie on the Cytoplasmic side of the membrane. A helical membrane pass occupies residues 18–38 (MTVFVFIACLVASSGGLIFGY). Over 39-81 (DIGISGGVTSMDPFLSRFFPSVYAKEKEVVDTNQYCKFDSEPL) the chain is Extracellular. A helical transmembrane segment spans residues 82–102 (TLFTSSLYLAALIASLFASVI). Residues 103–116 (TRKLGRKMTMLGGG) lie on the Cytoplasmic side of the membrane. The helical transmembrane segment at 117–137 (FIFLIGAVLNGAAVNVAMLII) threads the bilayer. Topologically, residues 138–139 (GR) are extracellular. The helical transmembrane segment at 140 to 160 (ILLGIGVGFSIQAVPLYLSEM) threads the bilayer. Residues 161–166 (APAKMR) are Cytoplasmic-facing. The helical transmembrane segment at 167–187 (GMLNIIFQLMITVGILFANLI) threads the bilayer. The Extracellular segment spans residues 188 to 201 (NYFTDKIAGGWGWR). A helical transmembrane segment spans residues 202 to 222 (VSLGLAAVPAVIMTVGSILLP). Over 223–294 (DTPNSLLSRG…MSVLIPTLQQ (72 aa)) the chain is Cytoplasmic. Residues 295-315 (LTGINVVMFYAPVLFKTIGFG) form a helical membrane-spanning segment. The Extracellular portion of the chain corresponds to 316–320 (GTASL). Residues 321 to 341 (MSAVITGLVNMFATFVSIATV) form a helical membrane-spanning segment. At 342 to 347 (DRFGRR) the chain is on the cytoplasmic side. A helical membrane pass occupies residues 348–368 (VLFIQGGIQMIIAQFILGTLI). The Extracellular segment spans residues 369-385 (AVKFGTAGVANISQGYA). A helical transmembrane segment spans residues 386–406 (IVVVLFICLFVSAFAWSWGPL). The Cytoplasmic segment spans residues 407–425 (GWLVPSEIFPLEIRSAAQS). Residues 426–446 (VVVVFNMAFTFFIAQIFLMML) traverse the membrane as a helical segment. The Extracellular segment spans residues 447-450 (CRLK). The helical transmembrane segment at 451–471 (FGLFFFFGAMELIMTGFVLVF) threads the bilayer. Residues 472 to 512 (LPETKGIPIEEMDRIWGEHWYWSRFVGAGRNRVMQMASTNV) are Cytoplasmic-facing.

This sequence belongs to the major facilitator superfamily. Sugar transporter (TC 2.A.1.1) family.

Its subcellular location is the membrane. Its function is as follows. Mediates active uptake of hexoses by sugar:proton symport. The chain is Sugar transport protein MST7 from Oryza sativa subsp. japonica (Rice).